The following is a 212-amino-acid chain: 2-hydroxychromene-2-carboxylate isomerase (212 aa).

Residue Ser-24 is the Nucleophile of the active site. Ser-24 lines the glutathione pocket. Substrate is bound by residues Lys-56, 66-67 (NR), and Tyr-97. Glutathione-binding positions include Val-181 and 192-195 (WGND).

The protein belongs to the GST superfamily. NadH family. The cofactor is glutathione.

The catalysed reaction is 2-hydroxychromene-2-carboxylate = (3E)-4-(2-hydroxyphenyl)-2-oxobut-3-enoate. The protein operates within aromatic compound metabolism; naphthalene degradation. Its function is as follows. Involved in the naphthalene catabolic pathway. Catalyzes the reversible glutathione-dependent isomerization of 2-hydroxychromene-2-carboxylate (HCCA) to trans-O-hydroxybenzylidenepyruvate (THBPA). In Pseudomonas sp. (strain C18), this protein is 2-hydroxychromene-2-carboxylate isomerase (doxJ).